A 554-amino-acid polypeptide reads, in one-letter code: Condensin-2 complex subunit H2 (554 aa).

Phosphoserine is present on residues S45, S178, S182, S199, and S200. The disordered stretch occupies residues 154-296 (PVDVHPMPRS…GQKRKRKGAT (143 aa)). A compositionally biased stretch (polar residues) spans 179–191 (RNGSPVSVRSISQ). Positions 201-210 (GDEDAEDVAE) are enriched in acidic residues. S441 is subject to Phosphoserine.

The protein belongs to the CND2 H2 (condensin-2 subunit 2) family. In terms of assembly, component of the condensin-2 complex, which contains the SMC2 and SMC4 heterodimer, and three non SMC subunits, NCAPG2, NCAPH2 and NCAPD3 that probably regulate the complex.

The protein resides in the nucleus. Regulatory subunit of the condensin-2 complex, a complex that seems to provide chromosomes with an additional level of organization and rigidity and in establishing mitotic chromosome architecture. May promote the resolution of double-strand DNA catenanes (intertwines) between sister chromatids. Condensin-mediated compaction likely increases tension in catenated sister chromatids, providing directionality for type II topoisomerase-mediated strand exchanges toward chromatid decatenation. Required for decatenation of chromatin bridges at anaphase. Early in neurogenesis, may play an essential role to ensure accurate mitotic chromosome condensation in neuron stem cells, ultimately affecting neuron pool and cortex size. Seems to have lineage-specific role in T-cell development. This Rattus norvegicus (Rat) protein is Condensin-2 complex subunit H2 (Ncaph2).